A 245-amino-acid chain; its full sequence is Polyhedrin (245 aa).

The nuclear localization signal stretch occupies residues 32-35; it reads KRKK.

Belongs to the polyhedrin family.

It localises to the host nucleus. In terms of biological role, major component of the virus occlusion bodies which are large proteinaceous structures termed polyhedra. These structures serve as the protective package for the virus particles outside the infected host and allow natural transmission of virus between insect hosts, assisting persistence in the environment. Forms the paracrystalline lattice of polyhedra and interacts with enveloped virions as well as other accessory molecules and structures to form a mature viral occlusion body. This is Polyhedrin (PH) from Lepidoptera (butterflies and moths).